An 808-amino-acid chain; its full sequence is ATP-dependent 6-phosphofructokinase (808 aa).

A disordered region spans residues 1 to 21 (MSSTQAPVEPPKRRRIGVLTS). Positions 1 to 389 (MSSTQAPVEP…YHFAYRNTAT (389 aa)) are N-terminal catalytic PFK domain 1. Residues Gly-23, 86 to 87 (RS), and 116 to 119 (GDGS) each bind ATP. Asp-117 is a binding site for Mg(2+). Substrate-binding positions include 162–164 (SID), Arg-199, 206–208 (MGR), Glu-263, Arg-291, and 297–300 (HTQR). Asp-164 serves as the catalytic Proton acceptor. The tract at residues 390–403 (PDHPKMILPQDKRM) is interdomain linker. A C-terminal regulatory PFK domain 2 region spans residues 404–808 (RIAIIHVGAP…DIDPSALTSS (405 aa)). Beta-D-fructose 2,6-bisphosphate is bound by residues Arg-480, 537–541 (TISNN), Arg-575, 582–584 (QGG), Glu-642, Arg-668, 674–677 (HFQQ), and Arg-749.

This sequence belongs to the phosphofructokinase type A (PFKA) family. ATP-dependent PFK group I subfamily. Eukaryotic two domain clade 'E' sub-subfamily. Homotetramer. The cofactor is Mg(2+).

The protein localises to the cytoplasm. The enzyme catalyses beta-D-fructose 6-phosphate + ATP = beta-D-fructose 1,6-bisphosphate + ADP + H(+). It functions in the pathway carbohydrate degradation; glycolysis; D-glyceraldehyde 3-phosphate and glycerone phosphate from D-glucose: step 3/4. With respect to regulation, allosterically activated by ADP, AMP, or fructose 2,6-bisphosphate, and allosterically inhibited by ATP or citrate. In terms of biological role, catalyzes the phosphorylation of D-fructose 6-phosphate to fructose 1,6-bisphosphate by ATP, the first committing step of glycolysis. The chain is ATP-dependent 6-phosphofructokinase (pfkA) from Aspergillus fumigatus (strain ATCC MYA-4609 / CBS 101355 / FGSC A1100 / Af293) (Neosartorya fumigata).